The primary structure comprises 298 residues: Probable endonuclease 4 (298 aa).

Zn(2+) is bound by residues H69, H110, E145, D179, H182, H214, D227, H229, and E259.

Belongs to the AP endonuclease 2 family. Requires Zn(2+) as cofactor.

It carries out the reaction Endonucleolytic cleavage to 5'-phosphooligonucleotide end-products.. Functionally, endonuclease IV plays a role in DNA repair. It cleaves phosphodiester bonds at apurinic or apyrimidinic (AP) sites, generating a 3'-hydroxyl group and a 5'-terminal sugar phosphate. This chain is Probable endonuclease 4, found in Geobacillus sp. (strain WCH70).